Here is a 1906-residue protein sequence, read N- to C-terminus: DENN domain-containing protein 4C (1906 aa).

The region spanning 40-199 is the MABP domain; it reads KAPITDIAVI…NVFLCYKKSV (160 aa). One can recognise a uDENN domain in the interval 191-363; that stretch reads VFLCYKKSVP…NIPFPSPQRP (173 aa). Residues 384 to 520 enclose the cDENN domain; that stretch reads PLPLSGANFS…PCKSLLGTLR (137 aa). Residues 522 to 640 form the dDENN domain; it reads LYQQLCSVHR…CSFVSDKDTG (119 aa). 3 positions are modified to phosphoserine: Ser-702, Ser-736, and Ser-740. A PPR repeat occupies 818–852; that stretch reads DEVCYRVVMQLCGLWVNPVLAVRVLFEMKTARIKP. Residues 904 to 917 are compositionally biased toward polar residues; the sequence is SQVFSISGGQSDQG. 2 disordered regions span residues 904-942 and 963-984; these read SQVF…PPEL and LQPT…SIVK. The span at 920–939 shows a compositional bias: basic and acidic residues; that stretch reads SKDELVKEGADGHAPEEHTP. Thr-966 carries the post-translational modification Phosphothreonine. Residues 966-975 are compositionally biased toward pro residues; it reads TPEPQSPTEP. The residue at position 971 (Ser-971) is a Phosphoserine. Thr-973 carries the phosphothreonine modification. Residues Ser-987, Ser-1000, Ser-1043, Ser-1058, Ser-1096, and Ser-1123 each carry the phosphoserine modification. Positions 1154-1171 are enriched in polar residues; it reads NSLQSNSHSDQSRDTQAG. The disordered stretch occupies residues 1154-1184; it reads NSLQSNSHSDQSRDTQAGAQDPVNKRSSSYA. 5 positions are modified to phosphoserine: Ser-1181, Ser-1221, Ser-1240, Ser-1248, and Ser-1274. The interval 1246-1317 is disordered; it reads SCSMELHGEG…PQSPYRAYKD (72 aa). Basic and acidic residues predominate over residues 1281–1291; it reads PPARDSTETEK. Positions 1292–1302 are enriched in polar residues; sequence SSPAVSSSKTL. Residues Ser-1321, Ser-1333, and Ser-1342 each carry the phosphoserine modification. Disordered stretches follow at residues 1410-1440, 1548-1577, and 1596-1628; these read SPNT…GDVG, STSG…SAEP, and ASYT…LSKR. Residues 1423 to 1437 are compositionally biased toward low complexity; the sequence is LTQSNTSLGSSSSSG. 2 stretches are compositionally biased toward polar residues: residues 1548–1564 and 1611–1628; these read STSG…SASE and GDVQ…LSKR. A phosphoserine mark is found at Ser-1620, Ser-1624, Ser-1626, Ser-1637, and Ser-1796.

Phosphorylated in response to insulin.

Its subcellular location is the cytoplasmic vesicle membrane. The protein localises to the cell membrane. It localises to the cytoplasm. The protein resides in the cytosol. Its function is as follows. Guanine nucleotide exchange factor (GEF) activating RAB10. Promotes the exchange of GDP to GTP, converting inactive GDP-bound RAB10 into its active GTP-bound form. Thereby, stimulates SLC2A4/GLUT4 glucose transporter-enriched vesicles delivery to the plasma membrane in response to insulin. This chain is DENN domain-containing protein 4C (Dennd4c), found in Mus musculus (Mouse).